The following is a 421-amino-acid chain: Histidine--tRNA ligase (421 aa).

Belongs to the class-II aminoacyl-tRNA synthetase family. As to quaternary structure, homodimer.

The protein resides in the cytoplasm. The catalysed reaction is tRNA(His) + L-histidine + ATP = L-histidyl-tRNA(His) + AMP + diphosphate + H(+). This is Histidine--tRNA ligase from Fervidobacterium nodosum (strain ATCC 35602 / DSM 5306 / Rt17-B1).